The chain runs to 647 residues: Shugoshin-2 (647 aa).

Position 7 is a phosphoserine (S7). Coiled-coil stretches lie at residues 28 to 87 (SKAQ…FHEE) and 125 to 145 (DEES…HDVS). Residues 171-295 (REANVFSDTQ…DTVIQSTPTK (125 aa)) form a disordered region. Positions 200-210 (NLSNSKPVNNN) are enriched in low complexity. S240 carries the phosphoserine modification. Composition is skewed to polar residues over residues 242–253 (KSLSNKINNQAA) and 282–293 (RIQSDTVIQSTP). T292 carries the phosphothreonine modification. Phosphoserine is present on residues S332 and S335. Composition is skewed to polar residues over residues 375 to 396 (SLTS…NMTV) and 462 to 478 (EPPS…NNSP). Disordered stretches follow at residues 375 to 416 (SLTS…DSSV), 453 to 486 (RNPP…SLQG), 522 to 579 (TNLK…ERKK), and 593 to 647 (RNFD…TLNL). 2 stretches are compositionally biased toward basic and acidic residues: residues 528-541 (NEND…SRRE) and 593-602 (RNFDLPSDHV). Residues 621–647 (KTETANITSEAPTTSEVTLENSETLNL) show a composition bias toward polar residues.

The protein belongs to the shugoshin family.

The protein localises to the chromosome. The protein resides in the centromere. Functionally, involved in chromosome cohesion during mitosis and meiosis by preventing premature dissociation of cohesin complex from centromeres after prophase, when most of cohesin complex dissociates from chromosomes arms. Required for faithful mitotic chromosome segregation and proper kinetochore orientation during meiosis I. In contrast to sgo1, it is dispensable for centromeric protection of rec8 during meiosis I as well as protection of rad21 during mitosis. Required to sense the lack of tension at centromeres during mitosis. In Schizosaccharomyces pombe (strain 972 / ATCC 24843) (Fission yeast), this protein is Shugoshin-2 (sgo2).